Reading from the N-terminus, the 161-residue chain is MRCPFCGHPDTQVKDSRPAEDGNAIRRRRQCPSCAARFTTFERVQLRELTVMKKSGRRVPFDREKLNRSIQLAMQKRNIEPDRIDQMISGIVRRLESTGETDVTSDRVGELVMEGLKNLDAVAYVRYASVYKDFHKVEDFREFITDEALTAHFGPREDDDG.

Residues 1–23 (MRCPFCGHPDTQVKDSRPAEDGN) form a disordered region. A zinc finger lies at 3 to 34 (CPFCGHPDTQVKDSRPAEDGNAIRRRRQCPSC). Residues 11–23 (TQVKDSRPAEDGN) are compositionally biased toward basic and acidic residues. An ATP-cone domain is found at 49–139 (LTVMKKSGRR…VYKDFHKVED (91 aa)).

This sequence belongs to the NrdR family. Zn(2+) is required as a cofactor.

Its function is as follows. Negatively regulates transcription of bacterial ribonucleotide reductase nrd genes and operons by binding to NrdR-boxes. The chain is Transcriptional repressor NrdR from Maricaulis maris (strain MCS10) (Caulobacter maris).